We begin with the raw amino-acid sequence, 727 residues long: MTAFEEFGVLPELGMATDELDWTLPTDVQAEAIPLILGGGDVLMAAETGSGKTGAFCLPILQIVWETLRDLEEGKAGKGGAIGGAVTPWTMSFFDRGNALAVTPDGLRCQSREFKEWHGCRATTGVRGKGKFYFEATVTDEGLCRVGWSTQQANLDLGTCRMGFGFGGTGKKSNNRQFDDYGEAFGKADVIGCLLDLKNQEVSFTKNGQNLGVAFRLPDNLAKETFYPAVVLKNAEMQFNFGKTDFKYAPGNGFVGACQAGPEHSKANPITGPAAGAPSAKPAPNAPQAIIMEPSRELAEQTYNQIEKFKYHLSNPEVRSLLLIGGVRLEEQKAQLMQGTHIVVGTPGRLEEMINSGLVLLTHCRFFVLDEADALLKQGYTELIDRLHKQIPKITSDGRRLQMVVCSATLHAFEVKKMAERLMHFPTWVDLKGEDAVPETVHHVVCLVDPQMDTTWQSLRQPIGTDGVHDRDNVHPGNHSKETLSQAVKLLKGEYCVHAIDKHNMDRAIIFCRTKQDCDNLERFLRQRGGKHYSCVCLHGDRKPQERKENLEMFKRQQVKFLICTDVAARGLDITGLPFMINVTLPDDKTNYVHRIGRVGRAERMGLAISLVATVPEKVWYHGEWCKSRGRSCNNTNLTEVRGCCIWYNEPNLLAEVEDHLNITIQQVDKTMDVPVNDFDGKVVYGQKNLRTGSGYEDHVEQLVPTVRKLTELELQSQSLFLKRLKV.

A Helicase ATP-binding domain is found at 2–428 (TAFEEFGVLP…AERLMHFPTW (427 aa)). An ATP-binding site is contributed by 46 to 53 (AETGSGKT). A B30.2/SPRY domain is found at 69–246 (RDLEEGKAGK…MQFNFGKTDF (178 aa)). A DEAD box motif is present at residues 370 to 373 (DEAD). Residues 483–676 (TLSQAVKLLK…QVDKTMDVPV (194 aa)) form the Helicase C-terminal domain.

Belongs to the DEAD box helicase family. DDX1 subfamily.

The enzyme catalyses ATP + H2O = ADP + phosphate + H(+). Acts as an ATP-dependent RNA helicase, able to unwind both RNA-RNA and RNA-DNA duplexes. Possesses 5' single-stranded RNA overhang nuclease activity. This Drosophila melanogaster (Fruit fly) protein is ATP-dependent RNA helicase Ddx1 (Ddx1).